A 556-amino-acid chain; its full sequence is Arginine--tRNA ligase (556 aa).

A 'HIGH' region motif is present at residues 132 to 142; it reads ANPTGDLHLGH.

The protein belongs to the class-I aminoacyl-tRNA synthetase family. Monomer.

It localises to the cytoplasm. The catalysed reaction is tRNA(Arg) + L-arginine + ATP = L-arginyl-tRNA(Arg) + AMP + diphosphate. This is Arginine--tRNA ligase from Listeria monocytogenes serotype 4b (strain F2365).